We begin with the raw amino-acid sequence, 463 residues long: Glycine--tRNA ligase (463 aa).

Substrate-binding residues include Arg-98 and Glu-174. ATP contacts are provided by residues 206–208 (RNE), 216–221 (FRTREF), 290–291 (EL), and 334–337 (GADR). 221–225 (FEQME) lines the substrate pocket. 330-334 (EPSLG) serves as a coordination point for substrate.

It belongs to the class-II aminoacyl-tRNA synthetase family. Homodimer.

It localises to the cytoplasm. The catalysed reaction is tRNA(Gly) + glycine + ATP = glycyl-tRNA(Gly) + AMP + diphosphate. In terms of biological role, catalyzes the attachment of glycine to tRNA(Gly). The chain is Glycine--tRNA ligase from Staphylococcus epidermidis (strain ATCC 35984 / DSM 28319 / BCRC 17069 / CCUG 31568 / BM 3577 / RP62A).